Reading from the N-terminus, the 223-residue chain is Small ribosomal subunit protein uS11m (223 aa).

The N-terminal 38 residues, 1-38 (MVLKHSVTYNLSFFISFTFSSIFFSSLILFLVYKSVLS), are a transit peptide targeting the mitochondrion.

This sequence belongs to the universal ribosomal protein uS11 family. As to quaternary structure, component of the mitochondrial small ribosomal subunit (mt-SSU). Mature yeast 74S mitochondrial ribosomes consist of a small (37S) and a large (54S) subunit. The 37S small subunit contains a 15S ribosomal RNA (15S mt-rRNA) and at least 32 different proteins. The 54S large subunit contains a 21S rRNA (21S mt-rRNA) and at least 45 different proteins.

Its subcellular location is the mitochondrion. Functionally, component of the mitochondrial ribosome (mitoribosome), a dedicated translation machinery responsible for the synthesis of mitochondrial genome-encoded proteins, including at least some of the essential transmembrane subunits of the mitochondrial respiratory chain. The mitoribosomes are attached to the mitochondrial inner membrane and translation products are cotranslationally integrated into the membrane. The polypeptide is Small ribosomal subunit protein uS11m (mrps18) (Schizosaccharomyces pombe (strain 972 / ATCC 24843) (Fission yeast)).